Consider the following 530-residue polypeptide: MSTLYLLANLRNRPDGRHSIDFGSLSARESDPVKMPHEITGLFSSDYCSSTSTTLEAEESEAYSKALSRNKRAAGILEHFLNGEQAAAHPSVCLQDRARLRLCEEAILVGAPRGTATRAREGIASYDKMEFLFPGSRQRKSIQMLHVSCPSLQPGATLLDSHSGSVHDSITILSGMCLFTRKILNSTTTNGRLDGQKLRHMPPTLYEMECIARLSAIIADVTTLTQSNFGEDNHPAVNIVLDLPSWHYYQFIEDCIKSDTCSLEEAIDWTEAIKLRRQQLASVLKKAVWHELGQRQVAHKSTLKAIQISPESTVVDELIKETLQRGHQPRLDDILHALSGTPHSLWPQFYSLLRDRDKPHSIRDLGFLFYVFQVVRPALLKAIPCQEAPSSKAPACEQPNLHRGQRQCLPQRPLIISLDDRAERKIYSQAHSLLLRLSRSSNQLVNPTLVQLYMPRRVYIDGNKDGQRLYWHDPSPVLPLLEGTKEQQRRDARNHDHHRRELQQTDILTELYGRDCSANIQGWFKEAGLC.

A Conserved DDXXE motif motif is present at residues 419 to 423 (DDRAE).

Belongs to the arginine-containing cyclodipeptide synthase family.

The catalysed reaction is L-aspartyl-tRNA(Asp) + L-arginyl-tRNA(Arg) = cyclo(L-arginyl-L-aspartyl) + tRNA(Asp) + tRNA(Arg) + 2 H(+). The protein operates within secondary metabolite biosynthesis. Arginine-containing cyclodipeptide synthase; part of the cluster that mediates the biosynthesis of a highly modified cyclo-arginine-aspartate dipeptide (cRD). Within the pathway, pthA acts as the scaffold-generating enzyme and is responsible for formation of the cyclo-Arg-Asp diketopiperazine (cRW) from L-arginyl-tRNA(Arg) + L-aspartyl-tRNA(Asp). Additional enzymes from the cluster then further modify the cyclo-Arg-Asp diketopiperazine (cRW) scaffold. This Penicillium thymicola protein is Arginine-containing cyclodipeptide synthase pthA.